The following is a 562-amino-acid chain: Protein KASH5 (562 aa).

Over 1-521 the chain is Cytoplasmic; it reads MDLPEGPVGG…PQRLRVTRHP (521 aa). The segment at 125–153 is disordered; it reads ALTSRQLPSGCPEAEEPANLESFGGEDPR. Residues 164–349 adopt a coiled-coil conformation; the sequence is SSLEDLELSN…LEEQLSQTYE (186 aa). Positions 407–481 are disordered; sequence ETSEETEFPS…DIPENPPERP (75 aa). The span at 431–448 shows a compositional bias: basic and acidic residues; the sequence is AHPEEGRKEPSMWLTRRE. Residues 522 to 542 form a helical; Anchor for type IV membrane protein membrane-spanning segment; sequence LIPAPVLGLLLLLLLSVLLLG. The segment at 541–562 is interaction with SUN1; that stretch reads LGPSPPPTWPHLQLCYLQPPPV. At 543–562 the chain is on the perinuclear space side; the sequence is PSPPPTWPHLQLCYLQPPPV.

In terms of assembly, core component the LINC complex which is composed of inner nuclear membrane SUN domain-containing proteins coupled to outer nuclear membrane KASH domain-containing nesprins. SUN and KASH domain-containing proteins seem to bind each other promiscuously; however, differentially expression of LINC complex constituents is giving rise to specific assemblies. At least SUN1/2-containing core LINC complexes are proposed to be hexameric composed of three protomers of each KASH and SUN domain-containing protein. Interacts with SUN1; this interaction mediates its telomere localization by forming a SUN1:KASH5 LINC complex. Component of a probable SUN2:KASH5 LINC complex. Self-associates. Interacts with DYNC1H1, DCTN1, DYNC1I1/2 and PAFAH1B1; suggesting the association with the dynein-dynactin motor complex. In terms of tissue distribution, expressed in testis (at protein level).

It is found in the nucleus outer membrane. Its subcellular location is the nucleus. It localises to the chromosome. The protein localises to the telomere. The protein resides in the nucleus envelope. Functionally, as a component of the LINC (LInker of Nucleoskeleton and Cytoskeleton) complex, involved in the connection between the nuclear lamina and the cytoskeleton. The nucleocytoplasmic interactions established by the LINC complex play an important role in the transmission of mechanical forces across the nuclear envelope and in nuclear movement and positioning. Required for telomere attachment to nuclear envelope in the prophase of meiosis. Required for rapid telomere prophase movements implicating a SUN1/2:KASH5 LINC complex in which SUN1 and SUN2 seem to act at least partial redundantly. Required for homolog pairing during meiotic prophase in spermatocytes and probably oocytes. Essential for male and female gametogenesis. Recruits cytoplasmic dynein to telomere attachment sites at the nuclear envelope in spermatocytes. In oocytes is involved in meiotic resumption and spindle formation. This Homo sapiens (Human) protein is Protein KASH5.